The following is a 583-amino-acid chain: Radixin (583 aa).

Positions 5 to 295 (INVRVTTMDA…GNHELYMRRR (291 aa)) constitute an FERM domain. 60-63 (KLNK) lines the a 1,2-diacyl-sn-glycero-3-phospho-(1D-myo-inositol) pocket. Lys83 is modified (N6-succinyllysine). Lys278 is an a 1,2-diacyl-sn-glycero-3-phospho-(1D-myo-inositol) binding site. Disordered regions lie at residues 310-330 (REEK…KKKR), 376-407 (DQER…AKQA), and 462-526 (ELKT…RVKK). Basic and acidic residues predominate over residues 376–400 (DQERKRAKEEAERLEKERRAAEEAK). Residues 469 to 480 (APPPPPPPPVIP) show a composition bias toward pro residues. Basic and acidic residues-rich tracts occupy residues 483-492 (ENEHDEHDEN) and 506-525 (MNHR…ERVK). The residue at position 564 (Thr564) is a Phosphothreonine; by ROCK2.

Binds NHERF1. Interacts with NHERF1, NHERF2, LAYN, MME/NEP and ICAM2. Interacts with CPNE1 (via VWFA domain) and CPNE4 (via VWFA domain). Interacts (via FERM domain) with SPN/CD43 cytoplasmic tail. Interacts with CD44. Interacts with CLIC5; may work together in a complex which also includes EZR and MYO6 to stabilize linkages between the plasma membrane and subjacent actin cytoskeleton at the base of stereocilia. Post-translationally, phosphorylated by tyrosine-protein kinases. Phosphorylation by ROCK2 suppresses the head-to-tail association of the N-terminal and C-terminal halves resulting in an opened conformation which is capable of actin and membrane-binding.

The protein localises to the cell membrane. It localises to the cytoplasm. Its subcellular location is the cytoskeleton. It is found in the cleavage furrow. The protein resides in the cell projection. The protein localises to the microvillus. It localises to the stereocilium. Its activity is regulated as follows. A head-to-tail association, of the N-terminal and C-terminal halves results in a closed conformation (inactive form) which is incapable of actin or membrane-binding. Its function is as follows. Probably plays a crucial role in the binding of the barbed end of actin filaments to the plasma membrane. This chain is Radixin (RDX), found in Homo sapiens (Human).